A 314-amino-acid chain; its full sequence is 2,3-dihydroxyphenylpropionate/2,3-dihydroxicinnamic acid 1,2-dioxygenase (314 aa).

The active-site Proton donor is the His-115. The active-site Proton acceptor is the His-179.

It belongs to the LigB/MhpB extradiol dioxygenase family. Homotetramer. The cofactor is Fe(2+).

The enzyme catalyses 3-(2,3-dihydroxyphenyl)propanoate + O2 = (2Z,4E)-2-hydroxy-6-oxonona-2,4-dienedioate + H(+). The catalysed reaction is (2E)-3-(2,3-dihydroxyphenyl)prop-2-enoate + O2 = (2Z,4E,7E)-2-hydroxy-6-oxonona-2,4,7-trienedioate + H(+). The protein operates within aromatic compound metabolism; 3-phenylpropanoate degradation. Its function is as follows. Catalyzes the non-heme iron(II)-dependent oxidative cleavage of 2,3-dihydroxyphenylpropionic acid and 2,3-dihydroxicinnamic acid into 2-hydroxy-6-ketononadienedioate and 2-hydroxy-6-ketononatrienedioate, respectively. In Klebsiella pneumoniae subsp. pneumoniae (strain ATCC 700721 / MGH 78578), this protein is 2,3-dihydroxyphenylpropionate/2,3-dihydroxicinnamic acid 1,2-dioxygenase.